Consider the following 342-residue polypeptide: Phosphate acyltransferase (342 aa).

This sequence belongs to the PlsX family. In terms of assembly, homodimer. Probably interacts with PlsY.

It localises to the cytoplasm. It catalyses the reaction a fatty acyl-[ACP] + phosphate = an acyl phosphate + holo-[ACP]. The protein operates within lipid metabolism; phospholipid metabolism. Catalyzes the reversible formation of acyl-phosphate (acyl-PO(4)) from acyl-[acyl-carrier-protein] (acyl-ACP). This enzyme utilizes acyl-ACP as fatty acyl donor, but not acyl-CoA. This Trichormus variabilis (strain ATCC 29413 / PCC 7937) (Anabaena variabilis) protein is Phosphate acyltransferase.